The primary structure comprises 129 residues: MTWLDDIRWDRDGLLPVIAQEAATGDVLMFAWMNREALARTAELGEAVYWSRSRGRLWHKGEESGHIQKVRDMRLDCDNDVLLLKVEQLGHEPSIACHTGRHSCFYQRYESGAWHAVELVLKDPEHIYR.

D76 provides a ligand contact to Mg(2+). Zn(2+) is bound at residue C77. The Mg(2+) site is built by D78 and D80. Zn(2+) contacts are provided by C97 and C104.

The protein belongs to the PRA-CH family. In terms of assembly, homodimer. The cofactor is Mg(2+). Zn(2+) serves as cofactor.

Its subcellular location is the cytoplasm. It catalyses the reaction 1-(5-phospho-beta-D-ribosyl)-5'-AMP + H2O = 1-(5-phospho-beta-D-ribosyl)-5-[(5-phospho-beta-D-ribosylamino)methylideneamino]imidazole-4-carboxamide. The protein operates within amino-acid biosynthesis; L-histidine biosynthesis; L-histidine from 5-phospho-alpha-D-ribose 1-diphosphate: step 3/9. Catalyzes the hydrolysis of the adenine ring of phosphoribosyl-AMP. This chain is Phosphoribosyl-AMP cyclohydrolase, found in Methylibium petroleiphilum (strain ATCC BAA-1232 / LMG 22953 / PM1).